The primary structure comprises 56 residues: Large ribosomal subunit protein eL20 (56 aa).

The tract at residues 1–24 is disordered; the sequence is MSTYTVRGSFPARDGPQQFEKEVE.

Belongs to the eukaryotic ribosomal protein eL20 family. In terms of assembly, part of the 50S ribosomal subunit. Binds 23S rRNA.

The protein is Large ribosomal subunit protein eL20 of Haloarcula marismortui (strain ATCC 43049 / DSM 3752 / JCM 8966 / VKM B-1809) (Halobacterium marismortui).